The sequence spans 450 residues: MKTVTEFQNKNILVLGIAKSGYAAATLLQKLGANVIVNDGKPLAENVLAAELQAKGMDVVCGGHPLELLERNISLVVKNPGIPYSNPILVAAKEKQIPIVTEVELAYRISEAPFVGITGSNGKTTTTMLTFEMLKEGQKHPVIAGNIGTVACEVAQDAKENEVVVTELSSFQLMGVELFQPKIAAFLNLFEAHLDYHGTKKEYGLAKANIFKNQTENDYSVINADDADVMALSAYSKGQKILFSTTKEIEDGACIKDNALYFKGEKVIEVSDIVLPGQHNLENILAAMSIAKLLGTSNEAITVVLKRFTGVKHRLEYVTTINNRKFYNDSKATNMLATEKALSAFTQPIVLLAGGLDRGNEFDDLIPYFKNVKAIVTFGQTAPKLVRAAEKAGLDIIESVDTLDEAVVKAYAHSKDGDVVLLSPACASWDQFKTFEERGDIFIQAVHKLI.

Residue 119 to 125 (GSNGKTT) participates in ATP binding.

Belongs to the MurCDEF family.

Its subcellular location is the cytoplasm. It carries out the reaction UDP-N-acetyl-alpha-D-muramoyl-L-alanine + D-glutamate + ATP = UDP-N-acetyl-alpha-D-muramoyl-L-alanyl-D-glutamate + ADP + phosphate + H(+). The protein operates within cell wall biogenesis; peptidoglycan biosynthesis. Cell wall formation. Catalyzes the addition of glutamate to the nucleotide precursor UDP-N-acetylmuramoyl-L-alanine (UMA). In Bacillus cereus (strain ATCC 14579 / DSM 31 / CCUG 7414 / JCM 2152 / NBRC 15305 / NCIMB 9373 / NCTC 2599 / NRRL B-3711), this protein is UDP-N-acetylmuramoylalanine--D-glutamate ligase.